The sequence spans 285 residues: Probable methyltransferase ltbC (285 aa).

The segment at 1–22 (MASTGQTNNYKQGYSSQTVETQ) is disordered.

This sequence belongs to the class I-like SAM-binding methyltransferase superfamily. Monomer.

Its function is as follows. Probable methyltransferase; part of the gene cluster that mediates the biosynthesis of luteodienoside A, a glycosylated polyketide consisting of an unusual 1-O-beta-D-glucopyranosyl-myo-inositol (glucinol) ester of 3-hydroxy-2,2,4-trimethylocta-4,6-dienoic acid. The HR-PKS ltbA produces the trimethylated polyketide chain from acetyl-CoA, malonyl-CoA and S-adenosylmethionine (SAM), and the ltbA cAT domain then uses glucinol produced by the glycosyltransferase ltbB as an offloading substrate to release luteodienoside A. Since ltbA and ltbB are sufficient for the biosynthesis of luteodienoside A, the functions of the methyltransferase ltbC and the FAD-binding monooxygenase ltbD within the pathway remain obscur. The chain is Probable methyltransferase ltbC from Aspergillus luteorubrus.